The sequence spans 501 residues: ATP synthase subunit alpha, chloroplastic (501 aa).

Position 170-177 (170-177) interacts with ATP; it reads GDRQTGKT.

It belongs to the ATPase alpha/beta chains family. As to quaternary structure, F-type ATPases have 2 components, CF(1) - the catalytic core - and CF(0) - the membrane proton channel. CF(1) has five subunits: alpha(3), beta(3), gamma(1), delta(1), epsilon(1). CF(0) has four main subunits: a, b, b' and c.

The protein localises to the plastid. The protein resides in the chloroplast thylakoid membrane. The catalysed reaction is ATP + H2O + 4 H(+)(in) = ADP + phosphate + 5 H(+)(out). Its function is as follows. Produces ATP from ADP in the presence of a proton gradient across the membrane. The alpha chain is a regulatory subunit. This is ATP synthase subunit alpha, chloroplastic from Pisum sativum (Garden pea).